Consider the following 273-residue polypeptide: 2-dehydro-3-deoxyphosphooctonate aldolase (273 aa).

The protein belongs to the KdsA family.

The protein resides in the cytoplasm. It carries out the reaction D-arabinose 5-phosphate + phosphoenolpyruvate + H2O = 3-deoxy-alpha-D-manno-2-octulosonate-8-phosphate + phosphate. Its pathway is carbohydrate biosynthesis; 3-deoxy-D-manno-octulosonate biosynthesis; 3-deoxy-D-manno-octulosonate from D-ribulose 5-phosphate: step 2/3. It functions in the pathway bacterial outer membrane biogenesis; lipopolysaccharide biosynthesis. The sequence is that of 2-dehydro-3-deoxyphosphooctonate aldolase from Geobacter sp. (strain M21).